Consider the following 502-residue polypeptide: MYTCPKTCTLTLKFFIDRFHTDYRLSKLAISFFDQKKNKMADSIPVKKKGSAKGPPSFVTPEYIEKQRQKKLEKMAKKAARKPIAPPSNAPPEFNTDFIKREMLSIPNYAPFETEKSALDITIMTYNVLAQTNIRRSMFPHSGEALKWKNRSRMLANELTYYSPTLGCMQEVDAEFVPNFYKKLLGGLGYELHFIKGEGKTHGIMIFWKSSLFKKVQDLTIYYDDHDELPGRMNTKNIGCCVRLERVDDPSRGLFLATTHLFWHPYGSYERLRQGAILVKEVNKMAQSHPSWPVFIAGDFNTEPFDTNFPALTTRPLSICQRATDIIERSMNYVFGESELEEKNASTKTENDSNEDDKEECQSSSTSSVPESTASTPKKRILHVQNDYVPHYRSFYQQHEQNPVLFSLYSVGYKLVHPENAKNTFDHPAFTNWAHAYQGHLDYIFVMNRDTSLQTPENQVVEGIKLKALLRVPLPSEMKEAEPLEGRYPSDHVALMANVQIV.

Residues 338-379 (SELEEKNASTKTENDSNEDDKEECQSSSTSSVPESTASTPKK) form a disordered region. A compositionally biased stretch (basic and acidic residues) spans 341 to 351 (EEKNASTKTEN). Over residues 363-376 (SSSTSSVPESTAST) the composition is skewed to low complexity.

Belongs to the CCR4/nocturin family.

It is found in the cytoplasm. The protein localises to the nucleus. The sequence is that of Probable RNA exonuclease C9B6.11c from Schizosaccharomyces pombe (strain 972 / ATCC 24843) (Fission yeast).